The chain runs to 554 residues: Apyrase (554 aa).

Positions 1-21 (MFKITVFIYVLQLILPSKVHS) are cleaved as a signal peptide. Positions 43, 45, 92, 124, 224, and 248 each coordinate a divalent metal cation. Residues arginine 358, asparagine 394, arginine 399, phenylalanine 418, phenylalanine 504, and aspartate 510 each coordinate AMP.

It belongs to the 5'-nucleotidase family. It depends on a divalent metal cation as a cofactor. As to expression, salivary gland (at protein level).

The protein resides in the secreted. It catalyses the reaction a ribonucleoside 5'-triphosphate + 2 H2O = a ribonucleoside 5'-phosphate + 2 phosphate + 2 H(+). Functionally, facilitates hematophagy by inhibiting ADP-dependent platelet aggregation in the host. Cleaves adenosine triphosphate (ATP) and adenosine diphosphate (ADP) to adenosine monophosphate (AMP) and inorganic phosphate. Shows potential for antithrombotic activity. Can induce basophil activation. May reduce probing time by facilitating the speed of locating blood. The polypeptide is Apyrase (Tabanus yao (Horsefly)).